A 349-amino-acid chain; its full sequence is Isopentenyl-diphosphate delta-isomerase (349 aa).

6–7 (RK) is a binding site for substrate. Residues 62-64 (AMT), Ser-93, and Asn-122 contribute to the FMN site. Gln-152 is a substrate binding site. Position 153 (Glu-153) interacts with Mg(2+). FMN contacts are provided by residues Lys-184, Thr-214, 258–259 (GG), and 280–281 (AG).

It belongs to the IPP isomerase type 2 family. As to quaternary structure, homooctamer. Dimer of tetramers. Requires FMN as cofactor. The cofactor is NADPH. Mg(2+) is required as a cofactor.

It is found in the cytoplasm. It catalyses the reaction isopentenyl diphosphate = dimethylallyl diphosphate. Its function is as follows. Involved in the biosynthesis of isoprenoids. Catalyzes the 1,3-allylic rearrangement of the homoallylic substrate isopentenyl (IPP) to its allylic isomer, dimethylallyl diphosphate (DMAPP). This chain is Isopentenyl-diphosphate delta-isomerase, found in Bacillus cereus (strain B4264).